Consider the following 812-residue polypeptide: Ribonucleoside-diphosphate reductase large subunit (812 aa).

The ATP-cone domain maps to 12 to 103; that stretch reads LYVIKRDGRQ…VSNLHKETKK (92 aa). Residues 16–17, 22–28, Thr64, and Asp68 each bind ATP; these read KR and EEVHFDK. Positions 213 and 228 each coordinate GDP. A disulfide bond links Cys229 and Cys455. Residues 237–239, Lys254, Arg267, and 274–275 each bind dTTP; these read DSI and CG. Position 438 (Asn438) interacts with GDP. Residue Asn438 is the Proton acceptor of the active site. Cys440 acts as the Cysteine radical intermediate in catalysis. GDP contacts are provided by residues Glu442 and 615–618; that span reads TAST. Residue Glu442 is the Proton acceptor of the active site. Residue Thr778 is modified to Phosphothreonine. Residue Ser782 is modified to Phosphoserine. Tyr786 is subject to Phosphotyrosine.

It belongs to the ribonucleoside diphosphate reductase large chain family. As to quaternary structure, heterodimer of a large and a small subunit.

The catalysed reaction is a 2'-deoxyribonucleoside 5'-diphosphate + [thioredoxin]-disulfide + H2O = a ribonucleoside 5'-diphosphate + [thioredoxin]-dithiol. Under complex allosteric control mediated by deoxynucleoside triphosphates and ATP binding to separate specificity and activation sites on the M1 subunit. The type of nucleotide bound at the specificity site determines substrate preference. It seems probable that ATP makes the enzyme reduce CDP and UDP, dGTP favors ADP reduction and dTTP favors GDP reduction. Stimulated by ATP and inhibited by dATP binding to the activity site. In terms of biological role, provides the precursors necessary for DNA synthesis. Catalyzes the biosynthesis of deoxyribonucleotides from the corresponding ribonucleotides. This Drosophila melanogaster (Fruit fly) protein is Ribonucleoside-diphosphate reductase large subunit (RnrL).